Consider the following 355-residue polypeptide: S-adenosylmethionine:tRNA ribosyltransferase-isomerase (355 aa).

The protein belongs to the QueA family. As to quaternary structure, monomer.

It localises to the cytoplasm. It catalyses the reaction 7-aminomethyl-7-carbaguanosine(34) in tRNA + S-adenosyl-L-methionine = epoxyqueuosine(34) in tRNA + adenine + L-methionine + 2 H(+). It functions in the pathway tRNA modification; tRNA-queuosine biosynthesis. In terms of biological role, transfers and isomerizes the ribose moiety from AdoMet to the 7-aminomethyl group of 7-deazaguanine (preQ1-tRNA) to give epoxyqueuosine (oQ-tRNA). This Burkholderia cenocepacia (strain ATCC BAA-245 / DSM 16553 / LMG 16656 / NCTC 13227 / J2315 / CF5610) (Burkholderia cepacia (strain J2315)) protein is S-adenosylmethionine:tRNA ribosyltransferase-isomerase.